A 273-amino-acid polypeptide reads, in one-letter code: 2,3,4,5-tetrahydropyridine-2,6-dicarboxylate N-succinyltransferase (273 aa).

Residues Arg104 and Asp141 each coordinate substrate.

This sequence belongs to the transferase hexapeptide repeat family. In terms of assembly, homotrimer.

The protein resides in the cytoplasm. It carries out the reaction (S)-2,3,4,5-tetrahydrodipicolinate + succinyl-CoA + H2O = (S)-2-succinylamino-6-oxoheptanedioate + CoA. It functions in the pathway amino-acid biosynthesis; L-lysine biosynthesis via DAP pathway; LL-2,6-diaminopimelate from (S)-tetrahydrodipicolinate (succinylase route): step 1/3. This chain is 2,3,4,5-tetrahydropyridine-2,6-dicarboxylate N-succinyltransferase, found in Neisseria gonorrhoeae (strain ATCC 700825 / FA 1090).